We begin with the raw amino-acid sequence, 466 residues long: Minor capsid protein L2 (466 aa).

The Nuclear localization signal motif lies at 1–12; it reads MVSSRASRRKRA. A disulfide bond links Cys-21 and Cys-27. Residues 447 to 455 carry the Nuclear localization signal motif; the sequence is YFLKKRKRI.

This sequence belongs to the papillomaviridae L2 protein family. As to quaternary structure, interacts with major capsid protein L1. Interacts with E2; this interaction inhibits E2 transcriptional activity but not the DNA replication function E2. Interacts with host GADD45GIP1. Interacts with host HSPA8; this interaction is required for L2 nuclear translocation. Interacts with host importins KPNB2 and KPNB3. Forms a complex with importin alpha2-beta1 heterodimers via interaction with the importin alpha2 adapter. Interacts with host DYNLT1; this interaction is essential for virus intracellular transport during entry. Interacts (via C-terminus) with host retromer subunits VPS35 and VPS29. Highly phosphorylated.

The protein resides in the virion. It localises to the host nucleus. Its subcellular location is the host early endosome. The protein localises to the host Golgi apparatus. Its function is as follows. Minor protein of the capsid that localizes along the inner surface of the virion, within the central cavities beneath the L1 pentamers. Plays a role in capsid stabilization through interaction with the major capsid protein L1. Once the virion enters the host cell, L2 escorts the genomic DNA into the nucleus by promoting escape from the endosomal compartments and traffic through the host Golgi network. Mechanistically, the C-terminus of L2 possesses a cell-penetrating peptide that protudes from the host endosome, interacts with host cytoplasmic retromer cargo and thereby mediates the capsid delivery to the host trans-Golgi network. Plays a role through its interaction with host dynein in the intracellular microtubule-dependent transport of viral capsid toward the nucleus. Mediates the viral genome import into the nucleus through binding to host importins. Once within the nucleus, L2 localizes viral genomes to host PML bodies in order to activate early gene expression for establishment of infection. Later on, promotes late gene expression by interacting with the viral E2 protein and by inhibiting its transcriptional activation functions. During virion assembly, encapsidates the genome by direct interaction with the viral DNA. The polypeptide is Minor capsid protein L2 (Homo sapiens (Human)).